Consider the following 150-residue polypeptide: UPF0178 protein Bcep18194_A4809 (150 aa).

This sequence belongs to the UPF0178 family.

In Burkholderia lata (strain ATCC 17760 / DSM 23089 / LMG 22485 / NCIMB 9086 / R18194 / 383), this protein is UPF0178 protein Bcep18194_A4809.